Reading from the N-terminus, the 449-residue chain is UPF0761 membrane protein Cpha266_1653 (449 aa).

The next 6 membrane-spanning stretches (helical) occupy residues 77–97, 133–153, 173–193, 214–234, 244–264, and 277–297; these read LLSLVPLLSVTLSILRVFPVF, SVPLLGVVFLFIIALSLISTI, FTLYWTVLTLGPVLIGSSLVA, LLSFLPFLNSVIAFFLLYMLV, AVYGSLLAAVLFELSKKWFVF, and GALSVIPMLFFWIYLEWVVVL.

It belongs to the UPF0761 family.

It localises to the cell inner membrane. The protein is UPF0761 membrane protein Cpha266_1653 of Chlorobium phaeobacteroides (strain DSM 266 / SMG 266 / 2430).